We begin with the raw amino-acid sequence, 317 residues long: Zinc finger protein 771 (317 aa).

Residues 1–17 (MPGEQQAEEEEEEEMQE) are compositionally biased toward acidic residues. Residues 1 to 63 (MPGEQQAEEE…APSADPARPH (63 aa)) form a disordered region. Lys-33 is covalently cross-linked (Glycyl lysine isopeptide (Lys-Gly) (interchain with G-Cter in SUMO2)). The span at 33 to 49 (KYEVVKLKIPMDNKEVP) shows a compositional bias: basic and acidic residues. 8 consecutive C2H2-type zinc fingers follow at residues 63-85 (HACP…ARTH), 91-113 (FGCT…GRTH), 119-141 (YECP…RRRH), 147-169 (YACA…LRVH), 175-197 (YACP…RRTH), 203-225 (YACA…RRVH), 231-253 (HRCA…ARTH), and 259-281 (YPCA…RRAH).

It belongs to the krueppel C2H2-type zinc-finger protein family.

Its subcellular location is the nucleus. In terms of biological role, may be involved in transcriptional regulation. This is Zinc finger protein 771 (ZNF771) from Homo sapiens (Human).